Here is a 161-residue protein sequence, read N- to C-terminus: Crossover junction endodeoxyribonuclease RuvC (161 aa).

Residues aspartate 8, glutamate 67, and aspartate 139 contribute to the active site. Residues aspartate 8, glutamate 67, and aspartate 139 each contribute to the Mg(2+) site.

It belongs to the RuvC family. As to quaternary structure, homodimer which binds Holliday junction (HJ) DNA. The HJ becomes 2-fold symmetrical on binding to RuvC with unstacked arms; it has a different conformation from HJ DNA in complex with RuvA. In the full resolvosome a probable DNA-RuvA(4)-RuvB(12)-RuvC(2) complex forms which resolves the HJ. Mg(2+) serves as cofactor.

The protein resides in the cytoplasm. The catalysed reaction is Endonucleolytic cleavage at a junction such as a reciprocal single-stranded crossover between two homologous DNA duplexes (Holliday junction).. Its function is as follows. The RuvA-RuvB-RuvC complex processes Holliday junction (HJ) DNA during genetic recombination and DNA repair. Endonuclease that resolves HJ intermediates. Cleaves cruciform DNA by making single-stranded nicks across the HJ at symmetrical positions within the homologous arms, yielding a 5'-phosphate and a 3'-hydroxyl group; requires a central core of homology in the junction. The consensus cleavage sequence is 5'-(A/T)TT(C/G)-3'. Cleavage occurs on the 3'-side of the TT dinucleotide at the point of strand exchange. HJ branch migration catalyzed by RuvA-RuvB allows RuvC to scan DNA until it finds its consensus sequence, where it cleaves and resolves the cruciform DNA. This Wigglesworthia glossinidia brevipalpis protein is Crossover junction endodeoxyribonuclease RuvC.